A 687-amino-acid polypeptide reads, in one-letter code: Outer dynein arm-docking complex subunit 1 (687 aa).

Coiled coils occupy residues 100-193, 222-267, and 341-421; these read QVRV…YLNV, REEA…LKLK, and INEQ…LFTR. The segment at 126 to 147 is disordered; it reads SRNSAHSKNARSPGCVQHDKVK. Disordered stretches follow at residues 363–388, 487–511, and 540–687; these read VSGR…QRVD, FPKK…AKDD, and ESTP…QSNY. The segment covering 366–388 has biased composition (basic and acidic residues); that stretch reads RRSEEDRRAQQEQQRAELQQRVD. Low complexity predominate over residues 544-556; that stretch reads SMTSSTQKVSSSS. Composition is skewed to polar residues over residues 557–611 and 620–629; these read RLVT…SSRG and RSPNSSSYLG. Residues 660-680 are compositionally biased toward low complexity; that stretch reads SPGPASSPGPASSTGQASSTS.

This sequence belongs to the ODA1/DCC2 family. Component of the outer dynein arm-docking complex along with ODAD2, ODAD3, ODAD4 and CLXN. Interacts with ODAD3. Interacts with ODAD4; this interaction may facilitate the recruitment and/or attachment of outer dynein arm docking complex proteins, including ODAD1, ODAD3, and ODAD4 to ciliary axonemes. Interacts with DNAH9. Interacts with MNS1. Interacts with PIERCE1 and PIERCE2; the interactions link the outer dynein arms docking complex (ODA-DC) to the internal microtubule inner proteins (MIP) in cilium axoneme. Expressed in trachea multiciliated cells.

The protein localises to the cytoplasm. It localises to the cytoskeleton. It is found in the cilium axoneme. Functionally, component of the outer dynein arm-docking complex (ODA-DC) that mediates outer dynein arms (ODA) binding onto the doublet microtubule. Involved in mediating assembly of both ODAs and their axonemal docking complex onto ciliary microtubules. This is Outer dynein arm-docking complex subunit 1 (ODAD1) from Bos taurus (Bovine).